We begin with the raw amino-acid sequence, 225 residues long: 3-dehydroquinate dehydratase (225 aa).

3-dehydroquinate contacts are provided by residues 30 to 32 and Arg-62; that span reads EWR. Residue His-118 is the Proton donor/acceptor of the active site. Residue Lys-143 is the Schiff-base intermediate with substrate of the active site. Arg-186, Ser-205, and Gln-209 together coordinate 3-dehydroquinate.

It belongs to the type-I 3-dehydroquinase family. Homodimer.

The catalysed reaction is 3-dehydroquinate = 3-dehydroshikimate + H2O. It participates in metabolic intermediate biosynthesis; chorismate biosynthesis; chorismate from D-erythrose 4-phosphate and phosphoenolpyruvate: step 3/7. In terms of biological role, involved in the third step of the chorismate pathway, which leads to the biosynthesis of aromatic amino acids. Catalyzes the cis-dehydration of 3-dehydroquinate (DHQ) and introduces the first double bond of the aromatic ring to yield 3-dehydroshikimate. In Streptococcus thermophilus (strain ATCC BAA-250 / LMG 18311), this protein is 3-dehydroquinate dehydratase.